A 135-amino-acid chain; its full sequence is Large ribosomal subunit protein mL41A (135 aa).

The N-terminal 13 residues, 1–13 (MGLISKIARGLVR), are a transit peptide targeting the mitochondrion.

Belongs to the mitochondrion-specific ribosomal protein mL41 family. Component of the mitochondrial ribosome large subunit (39S) which comprises a 16S rRNA and about 50 distinct proteins.

It localises to the mitochondrion. Functionally, component of the mitochondrial ribosome large subunit. Also involved in apoptosis and cell cycle. The polypeptide is Large ribosomal subunit protein mL41A (mrpl41-a) (Xenopus laevis (African clawed frog)).